The chain runs to 89 residues: OMEGA-ectatommitoxin(02)-Rm1a (89 aa).

A signal peptide spans 1 to 30 (MKDSYISIVIAYLMVTFILVSSMPIEGEKG). 3 cysteine pairs are disulfide-bonded: cysteine 39–cysteine 52, cysteine 47–cysteine 68, and cysteine 70–cysteine 79. In terms of domain architecture, EGF-like spans 43–80 (YANYCFNGKCVHVVAQDEPGKPCYSCICDKFYIGKRCG).

Belongs to the EGF domain peptide family. In terms of tissue distribution, expressed by the venom gland.

It is found in the secreted. Functionally, ant peptide with probable defensive activity which acts as a potent agonist of the mammalian epidermal growth factor receptor (EGFR). Mimics, both structurally and functionally, vertebrate epidermal growth factor (EGF) peptide hormones. In vivo, intraplantar injection in mice causes long-lasting (several days) hypersensitivity of the injected paw to both mechanical and thermal stimuli. Its long-lasting effect is unusual for venom toxins whose effects are usually immediate. One possible explanation is that it would reduce the duration of a nest attack, discourage future attacks, or enhance the actions of subsequent exposure to other pain-inducing venom peptides. This chain is OMEGA-ectatommitoxin(02)-Rm1a, found in Rhytidoponera metallica (Australian green-headed ant).